The primary structure comprises 174 residues: Methylated-DNA--protein-cysteine methyltransferase (174 aa).

C144 (nucleophile; methyl group acceptor) is an active-site residue.

The protein belongs to the MGMT family.

The protein resides in the cytoplasm. It catalyses the reaction a 6-O-methyl-2'-deoxyguanosine in DNA + L-cysteinyl-[protein] = S-methyl-L-cysteinyl-[protein] + a 2'-deoxyguanosine in DNA. The catalysed reaction is a 4-O-methyl-thymidine in DNA + L-cysteinyl-[protein] = a thymidine in DNA + S-methyl-L-cysteinyl-[protein]. Involved in the cellular defense against the biological effects of O6-methylguanine (O6-MeG) and O4-methylthymine (O4-MeT) in DNA. Repairs the methylated nucleobase in DNA by stoichiometrically transferring the methyl group to a cysteine residue in the enzyme. This is a suicide reaction: the enzyme is irreversibly inactivated. This Pyrococcus furiosus (strain ATCC 43587 / DSM 3638 / JCM 8422 / Vc1) protein is Methylated-DNA--protein-cysteine methyltransferase.